The primary structure comprises 372 residues: Molybdopterin synthase catalytic subunit (372 aa).

Residues 101–102 (HR), lysine 117, and 124–126 (KKE) each bind substrate.

This sequence belongs to the MoaE family. MOCS2B subfamily. As to quaternary structure, heterotetramer; composed of 2 small (Mocs2A) and 2 large (Mocs2B) subunits.

The protein localises to the cytoplasm. It catalyses the reaction 2 [molybdopterin-synthase sulfur-carrier protein]-C-terminal-Gly-aminoethanethioate + cyclic pyranopterin phosphate + H2O = molybdopterin + 2 [molybdopterin-synthase sulfur-carrier protein]-C-terminal Gly-Gly + 2 H(+). It functions in the pathway cofactor biosynthesis; molybdopterin biosynthesis. Functionally, catalytic subunit of the molybdopterin synthase complex, a complex that catalyzes the conversion of precursor Z into molybdopterin. Acts by mediating the incorporation of 2 sulfur atoms from thiocarboxylated Mocs2A into precursor Z to generate a dithiolene group. The chain is Molybdopterin synthase catalytic subunit from Drosophila willistoni (Fruit fly).